The primary structure comprises 555 residues: Potassium-transporting ATPase potassium-binding subunit (555 aa).

Helical transmembrane passes span Ile-2–Ile-22, Gln-60–Phe-80, Ile-130–Phe-150, Val-173–Thr-193, Met-246–Tyr-266, Ile-278–Glu-298, Ala-374–Val-394, Leu-412–Leu-432, Leu-483–Leu-503, and Gly-525–Leu-545.

This sequence belongs to the KdpA family. As to quaternary structure, the system is composed of three essential subunits: KdpA, KdpB and KdpC.

It localises to the cell membrane. Part of the high-affinity ATP-driven potassium transport (or Kdp) system, which catalyzes the hydrolysis of ATP coupled with the electrogenic transport of potassium into the cytoplasm. This subunit binds the extracellular potassium ions and delivers the ions to the membrane domain of KdpB through an intramembrane tunnel. This Bacillus cereus (strain ATCC 10987 / NRS 248) protein is Potassium-transporting ATPase potassium-binding subunit.